The chain runs to 456 residues: MELTSLTAISPVDGRYSNLTILLRNIFSEFGFLKYRLNIEVQWLKKIISMSQILDINNIEYKEILFLDSIVEEFNEKDAILIKNIEKETNHDIKALEYFLKNKIAQSKNLLTISEFVHFGCTSEDINNIAYSLMIKDARDKIILPLWYKIISTLKKMVFKYQHYPLLSLTHGQPATPSTMGKEIANFYYRMKRQYIILKKIEILGKINGSTGNYNAHLAAYPDINWHKISKDFITSFGINWNPYTTQIEPHDYIAEFFSCMSLFNTILINFNRDMWGYISLNYFKQRTIDYEIGSSIMPHKVNPIDFENSEGNLGLSNALMNHMITKLPISRWQRDLSDSTVLRNIGVAISYAIIAYNSVLSGINKLEINESELLKNLDKNWSILSEPIQTIMRRYGIKNAYEKLKKLTRGKEINRNVIHTFISSLNIPEEEKKRLKNMTPFNYIGAASQIINEIE.

Residues 15-16 (RY), 90-92 (NHD), and 122-123 (TS) contribute to the N(6)-(1,2-dicarboxyethyl)-AMP site. Histidine 171 acts as the Proton donor/acceptor in catalysis. Glutamine 247 is a N(6)-(1,2-dicarboxyethyl)-AMP binding site. The Proton donor/acceptor role is filled by serine 295. N(6)-(1,2-dicarboxyethyl)-AMP is bound by residues serine 296, 301–303 (KVN), asparagine 309, arginine 335, and 340–344 (STVLR).

It belongs to the lyase 1 family. Adenylosuccinate lyase subfamily. As to quaternary structure, homotetramer. Residues from neighboring subunits contribute catalytic and substrate-binding residues to each active site.

It catalyses the reaction N(6)-(1,2-dicarboxyethyl)-AMP = fumarate + AMP. The catalysed reaction is (2S)-2-[5-amino-1-(5-phospho-beta-D-ribosyl)imidazole-4-carboxamido]succinate = 5-amino-1-(5-phospho-beta-D-ribosyl)imidazole-4-carboxamide + fumarate. The protein operates within purine metabolism; AMP biosynthesis via de novo pathway; AMP from IMP: step 2/2. It participates in purine metabolism; IMP biosynthesis via de novo pathway; 5-amino-1-(5-phospho-D-ribosyl)imidazole-4-carboxamide from 5-amino-1-(5-phospho-D-ribosyl)imidazole-4-carboxylate: step 2/2. Catalyzes two reactions in de novo purine nucleotide biosynthesis. Catalyzes the breakdown of 5-aminoimidazole- (N-succinylocarboxamide) ribotide (SAICAR or 2-[5-amino-1-(5-phospho-beta-D-ribosyl)imidazole-4-carboxamido]succinate) to 5-aminoimidazole-4-carboxamide ribotide (AICAR or 5-amino-1-(5-phospho-beta-D-ribosyl)imidazole-4-carboxamide) and fumarate, and of adenylosuccinate (ADS or N(6)-(1,2-dicarboxyethyl)-AMP) to adenosine monophosphate (AMP) and fumarate. The polypeptide is Adenylosuccinate lyase (purB) (Buchnera aphidicola subsp. Acyrthosiphon pisum (strain APS) (Acyrthosiphon pisum symbiotic bacterium)).